The sequence spans 46 residues: Endochitinase 1A (46 aa).

Belongs to the glycosyl hydrolase 19 family. Chitinase class I subfamily.

It catalyses the reaction Random endo-hydrolysis of N-acetyl-beta-D-glucosaminide (1-&gt;4)-beta-linkages in chitin and chitodextrins.. Its function is as follows. Defense against chitin-containing fungal and bacterial pathogens. The protein is Endochitinase 1A of Arachis hypogaea (Peanut).